Here is a 361-residue protein sequence, read N- to C-terminus: Biotin synthase (361 aa).

One can recognise a Radical SAM core domain in the interval 47 to 278 (VHGDEVALCG…AAHIFVMGGR (232 aa)). Residues Cys65, Cys69, and Cys72 each coordinate [4Fe-4S] cluster. The [2Fe-2S] cluster site is built by Ser110, Cys143, and Cys203.

The protein belongs to the radical SAM superfamily. Biotin synthase family. As to quaternary structure, homodimer. The cofactor is [4Fe-4S] cluster. [2Fe-2S] cluster is required as a cofactor.

It carries out the reaction (4R,5S)-dethiobiotin + (sulfur carrier)-SH + 2 reduced [2Fe-2S]-[ferredoxin] + 2 S-adenosyl-L-methionine = (sulfur carrier)-H + biotin + 2 5'-deoxyadenosine + 2 L-methionine + 2 oxidized [2Fe-2S]-[ferredoxin]. The protein operates within cofactor biosynthesis; biotin biosynthesis; biotin from 7,8-diaminononanoate: step 2/2. Functionally, catalyzes the conversion of dethiobiotin (DTB) to biotin by the insertion of a sulfur atom into dethiobiotin via a radical-based mechanism. The protein is Biotin synthase of Anaeromyxobacter dehalogenans (strain 2CP-C).